The following is a 477-amino-acid chain: MAKEKGLTPQSQDFSEWYLEVIQKAELADYGPVRGTIVVRPYGYAIWENIQQVLDRMFKETGHQNAYFPLFIPMSFLRKEAEHVEGFSPELAVVTHAGGEELEEPLAVRPTSETVIGYMWSKWIRSWRDLPQLLNQWGNVVRWEMRTRPFLRTSEFLWQEGHTAHATREEAEEEVRRMLSIYARLAREYAAIPVIEGLKTEKEKFAGAVYTTTIEALMKDGKALQAGTSHYLGENFARAFDIKFQDRDLQVKYVHTTSWGLSWRFIGAIIMTHGDDRGLVLPPRLAPIQVVIVPIYKDESRERVLEAAQGLRQALLAQGLRVHLDDRDQHTPGYKFHEWELKGVPFRVELGPKDLEGGQAVLASRLGGKETLPLAALPEALPGKLDAFHEELYRRALAFREDHTRKVDTYEAFKEAVQEGFALAFHCGDKACERLIQEETTATTRCVPFEAEPEEGFCVRCGRPSAYGKRVVFAKAY.

T111, E113, and R142 together coordinate L-proline. Residues R142, T153, Q225, and T228 each contribute to the ATP site. Position 230 (H230) interacts with L-proline. The ATP site is built by S262 and R264. Residues 340 to 369 (ELKGVPFRVELGPKDLEGGQAVLASRLGGK) are interaction with tRNA. The Zn(2+) site is built by C427, C432, C458, and C461.

It belongs to the class-II aminoacyl-tRNA synthetase family. ProS type 3 subfamily. As to quaternary structure, homodimer. Only one tRNA molecule binds per dimer.

Its subcellular location is the cytoplasm. The catalysed reaction is tRNA(Pro) + L-proline + ATP = L-prolyl-tRNA(Pro) + AMP + diphosphate. Its function is as follows. Catalyzes the attachment of proline to tRNA(Pro) in a two-step reaction: proline is first activated by ATP to form Pro-AMP and then transferred to the acceptor end of tRNA(Pro). Can inadvertently accommodate and process cysteine. In Thermus thermophilus (strain ATCC 27634 / DSM 579 / HB8), this protein is Proline--tRNA ligase (proS).